A 398-amino-acid chain; its full sequence is Succinate--CoA ligase [ADP-forming] subunit beta (398 aa).

Positions 9 to 254 (KALLGEFGVP…ETEEDAKEIE (246 aa)) constitute an ATP-grasp domain. ATP is bound by residues lysine 46, 53 to 55 (GRG), glutamate 109, serine 112, and glutamate 117. Asparagine 209 and aspartate 223 together coordinate Mg(2+). Substrate-binding positions include asparagine 274 and 331-333 (GIM).

The protein belongs to the succinate/malate CoA ligase beta subunit family. In terms of assembly, heterotetramer of two alpha and two beta subunits. It depends on Mg(2+) as a cofactor.

It carries out the reaction succinate + ATP + CoA = succinyl-CoA + ADP + phosphate. The catalysed reaction is GTP + succinate + CoA = succinyl-CoA + GDP + phosphate. Its pathway is carbohydrate metabolism; tricarboxylic acid cycle; succinate from succinyl-CoA (ligase route): step 1/1. Its function is as follows. Succinyl-CoA synthetase functions in the citric acid cycle (TCA), coupling the hydrolysis of succinyl-CoA to the synthesis of either ATP or GTP and thus represents the only step of substrate-level phosphorylation in the TCA. The beta subunit provides nucleotide specificity of the enzyme and binds the substrate succinate, while the binding sites for coenzyme A and phosphate are found in the alpha subunit. In Bradyrhizobium diazoefficiens (strain JCM 10833 / BCRC 13528 / IAM 13628 / NBRC 14792 / USDA 110), this protein is Succinate--CoA ligase [ADP-forming] subunit beta.